The following is a 418-amino-acid chain: Serine--tRNA ligase (418 aa).

231–233 is a binding site for L-serine; that stretch reads TAE. Residue 262–264 participates in ATP binding; sequence RRE. Residue glutamate 285 participates in L-serine binding. 349-352 contacts ATP; it reads EISS. L-serine is bound at residue serine 384.

Belongs to the class-II aminoacyl-tRNA synthetase family. Type-1 seryl-tRNA synthetase subfamily. As to quaternary structure, homodimer. The tRNA molecule binds across the dimer.

Its subcellular location is the cytoplasm. It carries out the reaction tRNA(Ser) + L-serine + ATP = L-seryl-tRNA(Ser) + AMP + diphosphate + H(+). The catalysed reaction is tRNA(Sec) + L-serine + ATP = L-seryl-tRNA(Sec) + AMP + diphosphate + H(+). It participates in aminoacyl-tRNA biosynthesis; selenocysteinyl-tRNA(Sec) biosynthesis; L-seryl-tRNA(Sec) from L-serine and tRNA(Sec): step 1/1. Functionally, catalyzes the attachment of serine to tRNA(Ser). Is also able to aminoacylate tRNA(Sec) with serine, to form the misacylated tRNA L-seryl-tRNA(Sec), which will be further converted into selenocysteinyl-tRNA(Sec). The polypeptide is Serine--tRNA ligase (Coprothermobacter proteolyticus (strain ATCC 35245 / DSM 5265 / OCM 4 / BT)).